The chain runs to 516 residues: Arginyl-tRNA--protein transferase 1 (516 aa).

Positions 150 to 180 are enriched in basic and acidic residues; the sequence is IESEEKEKEKSIKKEGSKEFIHPQSIEEKLG. Residues 150–206 form a disordered region; that stretch reads IESEEKEKEKSIKKEGSKEFIHPQSIEEKLGSGEPSHPIKVHIGPKPGKGADLSKPP.

Belongs to the R-transferase family. In terms of assembly, monomer. Interacts with LIAT1; LIAT1 is not a substrate of ATE1, the interaction takes place in the cytoplasm and seems to increase ATE1 arginyltransferase activity. As to quaternary structure, interacts with LIAT1; has a higher affinity than the other isoforms. In terms of tissue distribution, widely expressed.

It localises to the nucleus. The protein resides in the cytoplasm. The enzyme catalyses an N-terminal L-alpha-aminoacyl-[protein] + L-arginyl-tRNA(Arg) = an N-terminal L-arginyl-L-aminoacyl-[protein] + tRNA(Arg) + H(+). In terms of biological role, involved in the post-translational conjugation of arginine to the N-terminal aspartate or glutamate of a protein. This arginylation is required for degradation of the protein via the ubiquitin pathway. Does not arginylate cysteine residues. The sequence is that of Arginyl-tRNA--protein transferase 1 from Mus musculus (Mouse).